The primary structure comprises 246 residues: Thaumatin-like protein 1 (246 aa).

A signal peptide spans 1-24; the sequence is MMKSQAALLGLTTLAILFFSGAHA. Cystine bridges form between C33–C245, C81–C91, C96–C103, C151–C234, C156–C217, C164–C180, C184–C193, and C194–C204.

It belongs to the thaumatin family. In terms of tissue distribution, equally expressed in the abscission zone and surrounding tissues of both fruitlets and leaves.

It localises to the secreted. May be involved in protecting plant tissues from pathogen infection. This Prunus persica (Peach) protein is Thaumatin-like protein 1.